The following is a 293-amino-acid chain: GPN-loop GTPase 3 (293 aa).

Position 13-18 (13-18) interacts with GTP; that stretch reads GAGKST. The short motif at 70-72 is the Gly-Pro-Asn (GPN)-loop; involved in dimer interface element; it reads GPN. Position 176 to 179 (176 to 179) interacts with GTP; that stretch reads SKMD. Positions 272-281 are enriched in basic and acidic residues; sequence HEAQEPREPN. Positions 272 to 293 are disordered; the sequence is HEAQEPREPNDEQDVDYEDADI. A compositionally biased stretch (acidic residues) spans 282–293; that stretch reads DEQDVDYEDADI.

This sequence belongs to the GPN-loop GTPase family. As to quaternary structure, heterodimers with gpn1 or gpn2. Binds to RNA polymerase II (RNAPII).

Small GTPase required for proper nuclear import of RNA polymerase II and III (RNAPII and RNAPIII). May act at an RNAP assembly step prior to nuclear import. The sequence is that of GPN-loop GTPase 3 from Aspergillus fumigatus (strain ATCC MYA-4609 / CBS 101355 / FGSC A1100 / Af293) (Neosartorya fumigata).